A 720-amino-acid polypeptide reads, in one-letter code: Fatty acid CoA ligase Acsl3 (720 aa).

Residues 21-41 (ILLYFIHFIISLYTILTYIPF) traverse the membrane as a helical; Signal-anchor for type III membrane protein segment. Residues 42-720 (YFLCESKQEK…ADIERMYGRK (679 aa)) are Cytoplasmic-facing. The residue at position 683 (serine 683) is a Phosphoserine.

It belongs to the ATP-dependent AMP-binding enzyme family. Mg(2+) is required as a cofactor.

The protein resides in the mitochondrion outer membrane. The protein localises to the peroxisome membrane. It is found in the microsome membrane. It localises to the endoplasmic reticulum membrane. It catalyses the reaction a long-chain fatty acid + ATP + CoA = a long-chain fatty acyl-CoA + AMP + diphosphate. The catalysed reaction is (E)-hexadec-2-enoate + ATP + CoA = (2E)-hexadecenoyl-CoA + AMP + diphosphate. The enzyme catalyses (5Z,8Z,11Z,14Z)-eicosatetraenoate + ATP + CoA = (5Z,8Z,11Z,14Z)-eicosatetraenoyl-CoA + AMP + diphosphate. It carries out the reaction 15-hydroxy-(5Z,8Z,11Z,13E)-eicosatetraenoate + ATP + CoA = 15-hydroxy-(5Z,8Z,11Z,13E)-eicosatetraenoyl-CoA + AMP + diphosphate. It catalyses the reaction 12-hydroxy-(5Z,8Z,10E,14Z)-eicosatetraenoate + ATP + CoA = 12-hydroxy-(5Z,8Z,10E,14Z)-eicosatetraenoyl-CoA + AMP + diphosphate. The catalysed reaction is 5-hydroxy-(6E,8Z,11Z,14Z)-eicosatetraenoate + ATP + CoA = 5-hydroxy-(6E,8Z,11Z,14Z)-eicosatetraenoyl-CoA + AMP + diphosphate. The enzyme catalyses 14,15-epoxy-(5Z,8Z,11Z)-eicosatrienoate + ATP + CoA = 14,15-epoxy-(5Z,8Z,11Z)-eicosatrienoyl-CoA + AMP + diphosphate. It carries out the reaction 11,12-epoxy-(5Z,8Z,14Z)-eicosatrienoate + ATP + CoA = 11,12-epoxy-(5Z,8Z,14Z)-eicosatrienoyl-CoA + AMP + diphosphate. It catalyses the reaction a medium-chain fatty acid + ATP + CoA = a medium-chain fatty acyl-CoA + AMP + diphosphate. The catalysed reaction is hexadecanoate + ATP + CoA = hexadecanoyl-CoA + AMP + diphosphate. The enzyme catalyses tetradecanoate + ATP + CoA = tetradecanoyl-CoA + AMP + diphosphate. It carries out the reaction dodecanoate + ATP + CoA = dodecanoyl-CoA + AMP + diphosphate. It catalyses the reaction octadecanoate + ATP + CoA = octadecanoyl-CoA + AMP + diphosphate. The catalysed reaction is eicosanoate + ATP + CoA = eicosanoyl-CoA + AMP + diphosphate. The enzyme catalyses (9Z)-octadecenoate + ATP + CoA = (9Z)-octadecenoyl-CoA + AMP + diphosphate. It carries out the reaction (9Z)-hexadecenoate + ATP + CoA = (9Z)-hexadecenoyl-CoA + AMP + diphosphate. It catalyses the reaction (9Z,12Z)-octadecadienoate + ATP + CoA = (9Z,12Z)-octadecadienoyl-CoA + AMP + diphosphate. The catalysed reaction is (9Z,12Z,15Z)-octadecatrienoate + ATP + CoA = (9Z,12Z,15Z)-octadecatrienoyl-CoA + AMP + diphosphate. The enzyme catalyses (4Z,7Z,10Z,13Z,16Z,19Z)-docosahexaenoate + ATP + CoA = (4Z,7Z,10Z,13Z,16Z,19Z)-docosahexaenoyl-CoA + AMP + diphosphate. It carries out the reaction (5Z,8Z,11Z,14Z,17Z)-eicosapentaenoate + ATP + CoA = (5Z,8Z,11Z,14Z,17Z)-eicosapentaenoyl-CoA + AMP + diphosphate. It catalyses the reaction a fatty acid + ATP + CoA = a fatty acyl-CoA + AMP + diphosphate. Functionally, acyl-CoA synthetases (ACSL) activates long-chain fatty acids for both synthesis of cellular lipids, and degradation via beta-oxidation. ACSL3 is required for the incorporation of fatty acids into phosphatidylcholine, the major phospholipid located on the surface of VLDL (very low density lipoproteins). Has mainly an anabolic role in energy metabolism. Mediates hepatic lipogenesis. Preferentially uses myristate, laurate, arachidonate and eicosapentaenoate as substrates. Both isoforms exhibit the same level of activity. The protein is Fatty acid CoA ligase Acsl3 of Mus musculus (Mouse).